The chain runs to 185 residues: ATP synthase subunit b 1 (185 aa).

A helical transmembrane segment spans residues Thr-4 to Trp-24.

This sequence belongs to the ATPase B chain family. In terms of assembly, F-type ATPases have 2 components, F(1) - the catalytic core - and F(0) - the membrane proton channel. F(1) has five subunits: alpha(3), beta(3), gamma(1), delta(1), epsilon(1). F(0) has three main subunits: a(1), b(2) and c(10-14). The alpha and beta chains form an alternating ring which encloses part of the gamma chain. F(1) is attached to F(0) by a central stalk formed by the gamma and epsilon chains, while a peripheral stalk is formed by the delta and b chains.

It localises to the cell inner membrane. Functionally, f(1)F(0) ATP synthase produces ATP from ADP in the presence of a proton or sodium gradient. F-type ATPases consist of two structural domains, F(1) containing the extramembraneous catalytic core and F(0) containing the membrane proton channel, linked together by a central stalk and a peripheral stalk. During catalysis, ATP synthesis in the catalytic domain of F(1) is coupled via a rotary mechanism of the central stalk subunits to proton translocation. Its function is as follows. Component of the F(0) channel, it forms part of the peripheral stalk, linking F(1) to F(0). This chain is ATP synthase subunit b 1, found in Ruegeria sp. (strain TM1040) (Silicibacter sp.).